A 337-amino-acid chain; its full sequence is MATRAMEELDGGLGSCQVDEDLSALADPCPSRPQEDSVRATSRLADSSSRSHDSQERVTEGSPTGSVDTKPKKMEKEPVSKVTSGAGKEKLKAGATPRSPARKKAQTASPTQPPPPPALSDELPWGDLTLNKCLVLASLVALLGSAFQLCREAVARDVEAPAPVPESWASSSSSPKGPASTLPKPEAWAPSVRQPEPPSKLEERVQIPRSEEAAEKDEWESEEAADGEHVPLAGRGPKEKLKKEKPRKERPGKEKPQKEERPRKEKPRKEEKPRGAREPQGALPRRWEAREGGHRPWGRDSGAPEDRKRQAWVSLRRPDEEDRPLGRQKRRAGKGRD.

The interval 1-84 (MATRAMEELD…EKEPVSKVTS (84 aa)) is mediates interaction with CACNA1S. Disordered stretches follow at residues 23–125 (SALA…ELPW) and 159–337 (EAPA…KGRD). Composition is skewed to basic and acidic residues over residues 49 to 59 (SRSHDSQERVT) and 69 to 79 (TKPKKMEKEPV). Positions 165–180 (PESWASSSSSPKGPAS) are enriched in low complexity. Residues 199 to 213 (SKLEERVQIPRSEEA) are compositionally biased toward basic and acidic residues. The segment covering 214–225 (AEKDEWESEEAA) has biased composition (acidic residues). 3 stretches are compositionally biased toward basic and acidic residues: residues 236 to 277 (GPKE…RGAR), 285 to 309 (RRWE…DRKR), and 316 to 325 (RRPDEEDRPL). Residues 326–337 (GRQKRRAGKGRD) show a composition bias toward basic residues.

Interacts with CACNA1S, CACNB1 and calsequestrin.

It localises to the sarcoplasmic reticulum membrane. It is found in the endoplasmic reticulum membrane. In terms of biological role, involved in skeletal muscle excitation/contraction coupling (EC), probably acting as a regulator of the voltage-sensitive calcium channel CACNA1S. EC is a physiological process whereby an electrical signal (depolarization of the plasma membrane) is converted into a chemical signal, a calcium gradient, by the opening of ryanodine receptor calcium release channels. May regulate CACNA1S membrane targeting and activity. The protein is Junctional sarcoplasmic reticulum protein 1 (JSRP1) of Bos taurus (Bovine).